The sequence spans 153 residues: Large ribosomal subunit protein eL15 (153 aa).

A Glycyl lysine isopeptide (Lys-Gly) (interchain with G-Cter in SUMO2) cross-link involves residue Lys-32. Residues Ser-46 and Ser-49 each carry the phosphoserine modification. Positions 114-135 are disordered; it reads TSAGRKSRGLGKGHKFHHTIGG. The segment covering 118-131 has biased composition (basic residues); the sequence is RKSRGLGKGHKFHH.

It belongs to the eukaryotic ribosomal protein eL15 family. Component of the large ribosomal subunit. Interacts with IFIT1 (via TPR repeats 1-4).

It is found in the cytoplasm. Its function is as follows. Component of the large ribosomal subunit. The ribosome is a large ribonucleoprotein complex responsible for the synthesis of proteins in the cell. The protein is Large ribosomal subunit protein eL15 (RPL15) of Sus scrofa (Pig).